A 394-amino-acid chain; its full sequence is Phosphoglycerate kinase (394 aa).

Substrate is bound by residues 21-23, Arg36, 59-62, Arg118, and Arg151; these read DFN and HLGR. Ser183 carries the post-translational modification Phosphoserine. An ATP-binding site is contributed by Lys201. Thr299 is subject to Phosphothreonine. Residues Glu323 and 350 to 353 each bind ATP; that span reads GGDS.

This sequence belongs to the phosphoglycerate kinase family. Monomer.

It localises to the cytoplasm. The enzyme catalyses (2R)-3-phosphoglycerate + ATP = (2R)-3-phospho-glyceroyl phosphate + ADP. Its pathway is carbohydrate degradation; glycolysis; pyruvate from D-glyceraldehyde 3-phosphate: step 2/5. In Geobacillus sp. (strain WCH70), this protein is Phosphoglycerate kinase.